The sequence spans 1025 residues: Putative calcium-transporting ATPase 11, plasma membrane-type (1025 aa).

Residues 1-157 (MSNLLKDFEV…NRYTEKPARS (157 aa)) lie on the Cytoplasmic side of the membrane. The tract at residues 19–30 (ARQRWRSSVGLV) is interaction with calmodulin. Residues 158-178 (FLTFVWEALQDITLIILMVCA) traverse the membrane as a helical segment. Residues 179–196 (VVSIGVGVATEGFPKGMY) lie on the Lumenal side of the membrane. Residues 197–217 (DGTGILLSIILVVMVTAISDY) form a helical membrane-spanning segment. At 218–345 (KQSLQFRDLD…EDETPLQVKL (128 aa)) the chain is on the cytoplasmic side. A helical transmembrane segment spans residues 346–365 (NGVATIIGKIGLGFAVLTFV). Residues 366–395 (VLCIRFVVEKATAGSITEWSSEDALTLLDY) are Lumenal-facing. The chain crosses the membrane as a helical span at residues 396–413 (FAIAVTIIVVAVPEGLPL). Topologically, residues 414–801 (AVTLSLAFAM…KWGRAVYINI (388 aa)) are cytoplasmic. The 4-aspartylphosphate intermediate role is filled by D451. The Mg(2+) site is built by D746 and D750. A helical transmembrane segment spans residues 802–820 (QKFVQFQLTVNVVALIINF). Residues 821 to 831 (VSACITGSAPL) lie on the Lumenal side of the membrane. A helical transmembrane segment spans residues 832–852 (TAVQLLWVNMIMDTLGALALA). At 853 to 872 (TEPPNEGLMKRQPIGRTASF) the chain is on the cytoplasmic side. A helical membrane pass occupies residues 873 to 895 (ITRAMWRNIIGQSIYQLIVLGIL). Over 896–907 (NFAGKQILNLNG) the chain is Lumenal. The helical transmembrane segment at 908-929 (PDSTIVLNTIIFNSFVFCQVFN) threads the bilayer. At 930–947 (EVNSREIEKINVFEGMFK) the chain is on the cytoplasmic side. The chain crosses the membrane as a helical span at residues 948–969 (SWVFVAVMTATVGFQVIIVEFL). Over 970–979 (GAFASTVPLS) the chain is Lumenal. The chain crosses the membrane as a helical span at residues 980 to 1001 (WQHWLLCILIGSVSMILAVGLK). Residues 1002-1025 (CIPVESNRHHDGYELLPSGPSDSA) are Cytoplasmic-facing.

This sequence belongs to the cation transport ATPase (P-type) (TC 3.A.3) family. Type IIB subfamily.

The protein resides in the membrane. The enzyme catalyses Ca(2+)(in) + ATP + H2O = Ca(2+)(out) + ADP + phosphate + H(+). With respect to regulation, activated by calmodulin. This magnesium-dependent enzyme catalyzes the hydrolysis of ATP coupled with the translocation of calcium from the cytosol out of the cell or into organelles. This is Putative calcium-transporting ATPase 11, plasma membrane-type (ACA11) from Arabidopsis thaliana (Mouse-ear cress).